A 436-amino-acid chain; its full sequence is MSSPGTESAGKSLQYRVDHLLSAVESELQAGSEKGDPTERELRVGLEESELWLRFKELTNEMIVTKNGRRMFPVLKVNVSGLDPNAMYSFLLDFVTADNHRWKYVNGEWVPGGKPEPQAPSCVYIHPDSPNFGAHWMKAPVSFSKVKLTNKLNGGGQIMLNSLHKYEPRIHIVRVGGPQRMITSHCFPETQFIAVTAYQNEEITALKIKYNPFAKAFLDAKERNDHKDVMEEPGDCQQPGYSQWGWLVPGAGTLCPPASSHPQFGGSLSLPSTHGCERYPALRNHRSSPYPSPYAHRNSSPTYADNSSACLSMLQSHDNWSSLGVPGHTSMLPVSHNASPPTGSSQYPSLWSVSNGTITPGSQTAGVSNGLGAQFFRGSPAHYTPLTHTVSAATSSSSGSPMYEGAATVTDISDSQYDTAQSLLIASWTPVSPPSM.

The T-box DNA-binding region spans 51 to 219 (LWLRFKELTN…YNPFAKAFLD (169 aa)).

As to quaternary structure, monomer. Binds DNA as a monomer.

Its subcellular location is the nucleus. Involved in the transcriptional regulation of genes required for mesoderm formation and differentiation. Binds to a palindromic T site 5'-TTCACACCTAGGTGTGAA-3' DNA sequence and activates gene transcription when bound to such a site. In Mus musculus (Mouse), this protein is T-box transcription factor T.